Here is an 887-residue protein sequence, read N- to C-terminus: Alanine--tRNA ligase (887 aa).

The span at 425–441 (MQEQKSRARSDRREKQQ) shows a compositional bias: basic and acidic residues. A disordered region spans residues 425 to 448 (MQEQKSRARSDRREKQQTGDGAGS). Zn(2+)-binding residues include His569, His573, Cys672, and His676.

The protein belongs to the class-II aminoacyl-tRNA synthetase family. Requires Zn(2+) as cofactor.

It localises to the cytoplasm. It carries out the reaction tRNA(Ala) + L-alanine + ATP = L-alanyl-tRNA(Ala) + AMP + diphosphate. Its function is as follows. Catalyzes the attachment of alanine to tRNA(Ala) in a two-step reaction: alanine is first activated by ATP to form Ala-AMP and then transferred to the acceptor end of tRNA(Ala). Also edits incorrectly charged Ser-tRNA(Ala) and Gly-tRNA(Ala) via its editing domain. The polypeptide is Alanine--tRNA ligase (Chlorobium luteolum (strain DSM 273 / BCRC 81028 / 2530) (Pelodictyon luteolum)).